Here is a 216-residue protein sequence, read N- to C-terminus: Probable GTP-binding protein EngB (216 aa).

Residues 37-214 (GSVEIAFAGR…RAAMIRLLDE (178 aa)) enclose the EngB-type G domain. Residues 45 to 52 (GRSNVGKS), 72 to 76 (GRTQE), 92 to 95 (DMPG), 159 to 162 (TKAD), and 193 to 195 (TSS) contribute to the GTP site. Mg(2+)-binding residues include Ser-52 and Thr-74.

The protein belongs to the TRAFAC class TrmE-Era-EngA-EngB-Septin-like GTPase superfamily. EngB GTPase family. The cofactor is Mg(2+).

In terms of biological role, necessary for normal cell division and for the maintenance of normal septation. The polypeptide is Probable GTP-binding protein EngB (Rhodopseudomonas palustris (strain ATCC BAA-98 / CGA009)).